Consider the following 224-residue polypeptide: Germin-like protein 8-12 (224 aa).

Positions 1–23 are cleaved as a signal peptide; it reads MASSSLFLLGALLVLASWQAIVA. An intrachain disulfide couples C33 to C48. The Cupin type-1 domain maps to 60–213; sequence FNAAKFDMPR…AFQVEKKLID (154 aa). A glycan (N-linked (GlcNAc...) asparagine) is linked at N78. Residues H111, H113, E118, and H158 each coordinate Mn(2+).

The protein belongs to the germin family. As to quaternary structure, oligomer (believed to be a pentamer but probably hexamer).

Its subcellular location is the secreted. The protein localises to the extracellular space. It is found in the apoplast. Functionally, plays a role in broad-spectrum disease resistance. Probably has no oxalate oxidase activity even if the active site is conserved. The polypeptide is Germin-like protein 8-12 (Oryza sativa subsp. japonica (Rice)).